Consider the following 110-residue polypeptide: Large ribosomal subunit protein uL22 (110 aa).

The protein belongs to the universal ribosomal protein uL22 family. Part of the 50S ribosomal subunit.

This protein binds specifically to 23S rRNA; its binding is stimulated by other ribosomal proteins, e.g. L4, L17, and L20. It is important during the early stages of 50S assembly. It makes multiple contacts with different domains of the 23S rRNA in the assembled 50S subunit and ribosome. Its function is as follows. The globular domain of the protein is located near the polypeptide exit tunnel on the outside of the subunit, while an extended beta-hairpin is found that lines the wall of the exit tunnel in the center of the 70S ribosome. This is Large ribosomal subunit protein uL22 from Acidovorax ebreus (strain TPSY) (Diaphorobacter sp. (strain TPSY)).